Here is a 248-residue protein sequence, read N- to C-terminus: tRNA (guanine-N(1)-)-methyltransferase (248 aa).

S-adenosyl-L-methionine contacts are provided by residues Gly117 and 137-142 (LGDFVL).

This sequence belongs to the RNA methyltransferase TrmD family. Homodimer.

It is found in the cytoplasm. It carries out the reaction guanosine(37) in tRNA + S-adenosyl-L-methionine = N(1)-methylguanosine(37) in tRNA + S-adenosyl-L-homocysteine + H(+). In terms of biological role, specifically methylates guanosine-37 in various tRNAs. The chain is tRNA (guanine-N(1)-)-methyltransferase from Herminiimonas arsenicoxydans.